Here is a 357-residue protein sequence, read N- to C-terminus: Fructose-bisphosphate aldolase, cytoplasmic isozyme (357 aa).

Residues Arg53 and Lys142 each contribute to the substrate site. The Proton acceptor role is filled by Glu183. The active-site Schiff-base intermediate with dihydroxyacetone-P is Lys225.

The protein belongs to the class I fructose-bisphosphate aldolase family.

It is found in the cytoplasm. The enzyme catalyses beta-D-fructose 1,6-bisphosphate = D-glyceraldehyde 3-phosphate + dihydroxyacetone phosphate. It functions in the pathway carbohydrate degradation; glycolysis; D-glyceraldehyde 3-phosphate and glycerone phosphate from D-glucose: step 4/4. The sequence is that of Fructose-bisphosphate aldolase, cytoplasmic isozyme from Spinacia oleracea (Spinach).